Consider the following 106-residue polypeptide: Nucleoid-associated protein Abu_0429 (106 aa).

This sequence belongs to the YbaB/EbfC family. As to quaternary structure, homodimer.

It localises to the cytoplasm. Its subcellular location is the nucleoid. Functionally, binds to DNA and alters its conformation. May be involved in regulation of gene expression, nucleoid organization and DNA protection. The sequence is that of Nucleoid-associated protein Abu_0429 from Aliarcobacter butzleri (strain RM4018) (Arcobacter butzleri).